Reading from the N-terminus, the 436-residue chain is Testis-expressed protein 44 (436 aa).

Composition is skewed to acidic residues over residues 1 to 10 (MTTEPLEDPE) and 45 to 54 (LPDEVPPEDI). Disordered regions lie at residues 1-142 (MTTE…LTSL) and 165-307 (AENN…SLYG). 2 stretches are compositionally biased toward polar residues: residues 81–103 (ASMQ…TDTS) and 167–195 (NNRT…TVSE). A compositionally biased stretch (basic and acidic residues) spans 234–247 (EPTKSADQEAEDFK). Residues 273 to 289 (QAPPSPNSPADSPPPSP) show a composition bias toward pro residues. At S375 the chain carries Phosphoserine.

The protein localises to the cytoplasm. This Rattus norvegicus (Rat) protein is Testis-expressed protein 44 (Tex44).